The following is a 307-amino-acid chain: Glycerol-3-phosphate dehydrogenase [NAD(P)+] (307 aa).

3 residues coordinate NADPH: Phe-11, Arg-31, and Lys-95. 3 residues coordinate sn-glycerol 3-phosphate: Lys-95, Gly-121, and Ser-123. Ala-125 is a binding site for NADPH. Sn-glycerol 3-phosphate is bound by residues Lys-176, Asp-229, Ser-239, Arg-240, and Asn-241. Residue Lys-176 is the Proton acceptor of the active site. Residue Arg-240 coordinates NADPH. Glu-261 is an NADPH binding site.

The protein belongs to the NAD-dependent glycerol-3-phosphate dehydrogenase family.

It localises to the cytoplasm. It carries out the reaction sn-glycerol 3-phosphate + NAD(+) = dihydroxyacetone phosphate + NADH + H(+). The enzyme catalyses sn-glycerol 3-phosphate + NADP(+) = dihydroxyacetone phosphate + NADPH + H(+). It participates in membrane lipid metabolism; glycerophospholipid metabolism. In terms of biological role, catalyzes the reduction of the glycolytic intermediate dihydroxyacetone phosphate (DHAP) to sn-glycerol 3-phosphate (G3P), the key precursor for phospholipid synthesis. In Jannaschia sp. (strain CCS1), this protein is Glycerol-3-phosphate dehydrogenase [NAD(P)+].